The following is a 797-amino-acid chain: Phenylalanine--tRNA ligase beta subunit (797 aa).

The 115-residue stretch at 40–154 (MEGLSKLVVG…ADAKVGDSIF (115 aa)) folds into the tRNA-binding domain. The B5 domain occupies 407-482 (PILPKVSITL…RIYGYDNLPS (76 aa)). Positions 460, 466, 469, and 470 each coordinate Mg(2+). The FDX-ACB domain maps to 704–797 (PKVQAVHRDI…LVEKLDIEIR (94 aa)).

This sequence belongs to the phenylalanyl-tRNA synthetase beta subunit family. Type 1 subfamily. In terms of assembly, tetramer of two alpha and two beta subunits. Requires Mg(2+) as cofactor.

The protein localises to the cytoplasm. It carries out the reaction tRNA(Phe) + L-phenylalanine + ATP = L-phenylalanyl-tRNA(Phe) + AMP + diphosphate + H(+). The chain is Phenylalanine--tRNA ligase beta subunit from Lactococcus lactis subsp. lactis (strain IL1403) (Streptococcus lactis).